A 100-amino-acid chain; its full sequence is Aspartyl/glutamyl-tRNA(Asn/Gln) amidotransferase subunit C (100 aa).

The protein belongs to the GatC family. In terms of assembly, heterotrimer of A, B and C subunits.

The catalysed reaction is L-glutamyl-tRNA(Gln) + L-glutamine + ATP + H2O = L-glutaminyl-tRNA(Gln) + L-glutamate + ADP + phosphate + H(+). It catalyses the reaction L-aspartyl-tRNA(Asn) + L-glutamine + ATP + H2O = L-asparaginyl-tRNA(Asn) + L-glutamate + ADP + phosphate + 2 H(+). In terms of biological role, allows the formation of correctly charged Asn-tRNA(Asn) or Gln-tRNA(Gln) through the transamidation of misacylated Asp-tRNA(Asn) or Glu-tRNA(Gln) in organisms which lack either or both of asparaginyl-tRNA or glutaminyl-tRNA synthetases. The reaction takes place in the presence of glutamine and ATP through an activated phospho-Asp-tRNA(Asn) or phospho-Glu-tRNA(Gln). This Streptococcus gordonii (strain Challis / ATCC 35105 / BCRC 15272 / CH1 / DL1 / V288) protein is Aspartyl/glutamyl-tRNA(Asn/Gln) amidotransferase subunit C.